A 655-amino-acid chain; its full sequence is p-hydroxybenzoic acid efflux pump subunit AaeB (655 aa).

Transmembrane regions (helical) follow at residues 13 to 33 (FAVKLACAIVLALFIGFHFQL), 38 to 58 (WAVLTAAIVAAGPAFAAGGEP), 69 to 89 (LRIIGTFIGCIAALIIIISMI), 93 to 113 (LLMILVCCVWAGFCTWISSLV), 121 to 141 (WGLSGYTALIIVITIQMEPLL), 152 to 172 (EIVIGIGCAILADLLFSPRSI), 370 to 390 (LFWLWTGWTSGNGAMVMIAVV), 407 to 427 (FIYGTLAALPLGLLYFLVIIP), 431 to 451 (QSMLLLCLSLAVLGFFIGIEV), 459 to 479 (MGALASTINIIVLDNPMTFHF), and 482 to 502 (FLDSALGQIVGCMLAFIVILL).

Belongs to the aromatic acid exporter ArAE (TC 2.A.85) family.

The protein localises to the cell inner membrane. Forms an efflux pump with AaeA. Could function as a metabolic relief valve, allowing to eliminate certain compounds when they accumulate to high levels in the cell. The chain is p-hydroxybenzoic acid efflux pump subunit AaeB from Salmonella heidelberg (strain SL476).